A 114-amino-acid polypeptide reads, in one-letter code: Putative antiporter subunit mnhC2 (114 aa).

3 helical membrane-spanning segments follow: residues 3 to 23 (LILL…ILSI), 28 to 48 (IVIG…SMGT), and 72 to 92 (AIVL…LVLV).

The protein belongs to the CPA3 antiporters (TC 2.A.63) subunit C family. As to quaternary structure, may form a heterooligomeric complex that consists of seven subunits: mnhA2, mnhB2, mnhC2, mnhD2, mnhE2, mnhF2 and mnhG2.

Its subcellular location is the cell membrane. This is Putative antiporter subunit mnhC2 (mnhC2) from Staphylococcus aureus (strain MRSA252).